Here is a 192-residue protein sequence, read N- to C-terminus: Small ribosomal subunit protein eS7 (192 aa).

This sequence belongs to the eukaryotic ribosomal protein eS7 family.

The chain is Small ribosomal subunit protein eS7 (RpS7) from Anopheles gambiae (African malaria mosquito).